Here is a 251-residue protein sequence, read N- to C-terminus: uncharacterized protein (251 aa).

The segment at 192 to 238 (CMMCVQRGDERVAITTPYTTDCGHTYCYACIMSRLKLVNNVSCPICK) adopts an RING-type zinc-finger fold.

Its subcellular location is the cytoplasm. This is an uncharacterized protein from Schizosaccharomyces pombe (strain 972 / ATCC 24843) (Fission yeast).